Here is a 451-residue protein sequence, read N- to C-terminus: F-box/LRR-repeat protein 13 (451 aa).

The 54-residue stretch at 17–70 folds into the F-box domain; it reads VDWISKLPDCLLCEVLLNLPTKDVVKTSVLSRRWRNLWKHVPGLDLDNTDFQEF. LRR repeat units lie at residues 128 to 155, 177 to 202, 224 to 251, and 335 to 363; these read DDSY…KLCG, TKFA…TIER, VADS…RLSD, and CVEF…VVKS. One can recognise an FBD domain in the interval 370–421; that stretch reads GENIILPGPRRFLSSLEYVKIERPLKGEAMEMKLVSYLLENSTILKKLTLCL.

The sequence is that of F-box/LRR-repeat protein 13 (FBL13) from Arabidopsis thaliana (Mouse-ear cress).